Reading from the N-terminus, the 25-residue chain is Chaperonin GroEL (25 aa).

Belongs to the chaperonin (HSP60) family. Forms a cylinder of 14 subunits composed of two heptameric rings stacked back-to-back. Interacts with the co-chaperonin GroES.

The protein resides in the cytoplasm. It catalyses the reaction ATP + H2O + a folded polypeptide = ADP + phosphate + an unfolded polypeptide.. Together with its co-chaperonin GroES, plays an essential role in assisting protein folding. The GroEL-GroES system forms a nano-cage that allows encapsulation of the non-native substrate proteins and provides a physical environment optimized to promote and accelerate protein folding. The chain is Chaperonin GroEL from Delftia acidovorans (Pseudomonas acidovorans).